The sequence spans 424 residues: Hemagglutinin-esterase (424 aa).

Residues 1 to 16 (MFLLPRFVLVSCIIGS) form the signal peptide. The esterase domain 1 stretch occupies residues 7 to 127 (FVLVSCIIGS…SNDIWMQNKG (121 aa)). The Virion surface portion of the chain corresponds to 17–392 (LGFDNPPTNV…PICVYDPLPL (376 aa)). Serine 40 (nucleophile) is an active-site residue. A disulfide bridge links cysteine 44 with cysteine 65. Asparagine 54, asparagine 89, asparagine 153, asparagine 236, and asparagine 301 each carry an N-linked (GlcNAc...) asparagine; by host glycan. Intrachain disulfides connect cysteine 113–cysteine 162, cysteine 197–cysteine 276, and cysteine 205–cysteine 249. Positions 128–266 (LFYTQVYKNM…GNYLAISNEL (139 aa)) are receptor binding. The esterase domain 2 stretch occupies residues 267–379 (LLTVPTKAIC…RCPTAADINN (113 aa)). A disulfide bridge links cysteine 307 with cysteine 312. Asparagine 316 carries N-linked (GlcNAc...) asparagine; by host glycosylation. Residues aspartate 326 and histidine 329 each act as charge relay system in the active site. Cysteine 347 and cysteine 371 are disulfide-bonded. Asparagine 358 carries an N-linked (GlcNAc...) asparagine; by host glycan. Residues 393-413 (ILLGILLGVAVIIIVVLLLYF) form a helical membrane-spanning segment. Residues 414–424 (MVDNGTRLHDA) lie on the Intravirion side of the membrane. Asparagine 417 carries an N-linked (GlcNAc...) asparagine; by host glycan.

This sequence belongs to the influenza type C/coronaviruses hemagglutinin-esterase family. As to quaternary structure, homodimer; disulfide-linked. Forms a complex with the M protein in the pre-Golgi. Associates then with S-M complex to form a ternary complex S-M-HE. N-glycosylated in the host RER.

It is found in the virion membrane. Its subcellular location is the host cell membrane. It catalyses the reaction N-acetyl-9-O-acetylneuraminate + H2O = N-acetylneuraminate + acetate + H(+). It carries out the reaction N-acetyl-4-O-acetylneuraminate + H2O = N-acetylneuraminate + acetate + H(+). Functionally, structural protein that makes short spikes at the surface of the virus. Contains receptor binding and receptor-destroying activities. Mediates de-O-acetylation of N-acetyl-4-O-acetylneuraminic acid, which is probably the receptor determinant recognized by the virus on the surface of erythrocytes and susceptible cells. This receptor-destroying activity is important for virus release as it probably helps preventing self-aggregation and ensures the efficient spread of the progeny virus from cell to cell. May serve as a secondary viral attachment protein for initiating infection, the spike protein being the major one. May become a target for both the humoral and the cellular branches of the immune system. The protein is Hemagglutinin-esterase of Bovine coronavirus (strain LY-138) (BCoV).